Here is a 384-residue protein sequence, read N- to C-terminus: UDP-N-acetylglucosamine--N-acetylmuramyl-(pentapeptide) pyrophosphoryl-undecaprenol N-acetylglucosamine transferase (384 aa).

Residues 17–19 (TGG), Asn131, Arg172, Ser200, and Gln301 contribute to the UDP-N-acetyl-alpha-D-glucosamine site.

It belongs to the glycosyltransferase 28 family. MurG subfamily.

The protein resides in the cell inner membrane. The catalysed reaction is di-trans,octa-cis-undecaprenyl diphospho-N-acetyl-alpha-D-muramoyl-L-alanyl-D-glutamyl-meso-2,6-diaminopimeloyl-D-alanyl-D-alanine + UDP-N-acetyl-alpha-D-glucosamine = di-trans,octa-cis-undecaprenyl diphospho-[N-acetyl-alpha-D-glucosaminyl-(1-&gt;4)]-N-acetyl-alpha-D-muramoyl-L-alanyl-D-glutamyl-meso-2,6-diaminopimeloyl-D-alanyl-D-alanine + UDP + H(+). Its pathway is cell wall biogenesis; peptidoglycan biosynthesis. Its function is as follows. Cell wall formation. Catalyzes the transfer of a GlcNAc subunit on undecaprenyl-pyrophosphoryl-MurNAc-pentapeptide (lipid intermediate I) to form undecaprenyl-pyrophosphoryl-MurNAc-(pentapeptide)GlcNAc (lipid intermediate II). The polypeptide is UDP-N-acetylglucosamine--N-acetylmuramyl-(pentapeptide) pyrophosphoryl-undecaprenol N-acetylglucosamine transferase (Granulibacter bethesdensis (strain ATCC BAA-1260 / CGDNIH1)).